The primary structure comprises 402 residues: Na(+)/H(+) antiporter NhaA 2 (402 aa).

11 helical membrane-spanning segments follow: residues 18–38 (AGGI…NTAL), 63–83 (ALLW…GLEV), 99–119 (SLPL…FYGI), 129–149 (GWAI…ALLG), 158–178 (ALLL…IAIF), 182–202 (GVEL…SAFG), 210–230 (IPYI…GVHA), 258–278 (ALHS…NAGV), 296–316 (IALG…WLAV), 329–349 (WLQV…SLFI), and 365–385 (IGVL…LVLG).

It belongs to the NhaA Na(+)/H(+) (TC 2.A.33) antiporter family.

Its subcellular location is the cell inner membrane. The catalysed reaction is Na(+)(in) + 2 H(+)(out) = Na(+)(out) + 2 H(+)(in). Functionally, na(+)/H(+) antiporter that extrudes sodium in exchange for external protons. The polypeptide is Na(+)/H(+) antiporter NhaA 2 (Erythrobacter litoralis (strain HTCC2594)).